Reading from the N-terminus, the 259-residue chain is Aliphatic sulfonates import ATP-binding protein SsuB 2 (259 aa).

An ABC transporter domain is found at 17–238; sequence LDILGLWKGF…VRSSQAFTSI (222 aa). Position 49–56 (49–56) interacts with ATP; sequence GRSGCGKS.

It belongs to the ABC transporter superfamily. Aliphatic sulfonates importer (TC 3.A.1.17.2) family. In terms of assembly, the complex is composed of two ATP-binding proteins (SsuB), two transmembrane proteins (SsuC) and a solute-binding protein (SsuA).

Its subcellular location is the cell inner membrane. The enzyme catalyses ATP + H2O + aliphatic sulfonate-[sulfonate-binding protein]Side 1 = ADP + phosphate + aliphatic sulfonateSide 2 + [sulfonate-binding protein]Side 1.. In terms of biological role, part of the ABC transporter complex SsuABC involved in aliphatic sulfonates import. Responsible for energy coupling to the transport system. The chain is Aliphatic sulfonates import ATP-binding protein SsuB 2 from Agrobacterium fabrum (strain C58 / ATCC 33970) (Agrobacterium tumefaciens (strain C58)).